Reading from the N-terminus, the 445-residue chain is Anthranilate N-benzoyltransferase protein 1 (445 aa).

Residues H164 and D392 each act as proton acceptor in the active site.

This sequence belongs to the plant acyltransferase family. Post-translationally, N-terminus is blocked.

The enzyme catalyses anthranilate + benzoyl-CoA = N-benzoylanthranilate + CoA. It functions in the pathway phytoalexin biosynthesis; methoxydianthramide B biosynthesis. Catalyzes the formation of N-benzoylanthranilate, in the course of methoxydianthramide B, a phytoalexin. Phytoalexins are produced in response to infection by parasites, and are essential for the expression of disease resistance. This chain is Anthranilate N-benzoyltransferase protein 1 (HCBT1), found in Dianthus caryophyllus (Carnation).